The sequence spans 467 residues: MATGKIVQIIGAVVDVEFPQSDVPSVYDALNVKDSKERLVLEVQQQLGGGVVRCIVMGSSDGLRRGVEVVNTGAPISVPVGTKTLGRIMNVLGDAIDERGEIGAEELYSIHRPAPSYEEQSNATELLETGVKVIDLICPFAKGGKIGLFGGAGVGKTVNMMELINNIALQHSGLSVFAGVGERTREGNDFYHEMQEAGVVNIEKPEESKVAMVYGQMNEPPGNRLRVALTGLTMAERFRDEGRDVLLFVDNIYRYTLAGTEVSALLGRMPSAVGYQPTLAEEMGVLQERITSTKQGSITSVQAVYVPADDLTDPSPATTFAHLDATVVLNRNIAAMGLYPAIDPLDSTSRQLDPLVVGQEHYDTARGVQQTLQRYKELKDIIAILGMDELSESDKQVVARARKIERFLTQPYHVAEVFTGDPGVYVPLKETLRGFKGLLAGEYDDIPEQAFMYCGTIDEAIENAKKL.

Residue 150–157 (GGAGVGKT) coordinates ATP.

This sequence belongs to the ATPase alpha/beta chains family. As to quaternary structure, F-type ATPases have 2 components, CF(1) - the catalytic core - and CF(0) - the membrane proton channel. CF(1) has five subunits: alpha(3), beta(3), gamma(1), delta(1), epsilon(1). CF(0) has three main subunits: a(1), b(2) and c(9-12). The alpha and beta chains form an alternating ring which encloses part of the gamma chain. CF(1) is attached to CF(0) by a central stalk formed by the gamma and epsilon chains, while a peripheral stalk is formed by the delta and b chains.

It is found in the cell inner membrane. It carries out the reaction ATP + H2O + 4 H(+)(in) = ADP + phosphate + 5 H(+)(out). Functionally, produces ATP from ADP in the presence of a proton gradient across the membrane. The catalytic sites are hosted primarily by the beta subunits. The chain is ATP synthase subunit beta from Vibrio vulnificus (strain YJ016).